Consider the following 122-residue polypeptide: Holo-[acyl-carrier-protein] synthase (122 aa).

Mg(2+) is bound by residues D8 and E55.

Belongs to the P-Pant transferase superfamily. AcpS family. Mg(2+) is required as a cofactor.

The protein resides in the cytoplasm. It catalyses the reaction apo-[ACP] + CoA = holo-[ACP] + adenosine 3',5'-bisphosphate + H(+). Transfers the 4'-phosphopantetheine moiety from coenzyme A to a Ser of acyl-carrier-protein. In Fusobacterium nucleatum subsp. nucleatum (strain ATCC 25586 / DSM 15643 / BCRC 10681 / CIP 101130 / JCM 8532 / KCTC 2640 / LMG 13131 / VPI 4355), this protein is Holo-[acyl-carrier-protein] synthase.